We begin with the raw amino-acid sequence, 403 residues long: Signal-transducing adaptor protein 2 (403 aa).

In terms of domain architecture, PH spans 18–130 (PSHYYESFLE…VPTDLTLLPG (113 aa)). A Phosphotyrosine; by SRC modification is found at tyrosine 22. The SH2 domain occupies 133 to 248 (YMMSEVLAKE…KALVPFLLDE (116 aa)). The residue at position 250 (tyrosine 250) is a Phosphotyrosine; by PTK6. The disordered stretch occupies residues 270–308 (APSAPGPGPAPCTGGPKPLSPASSQDKLPPLPPLPNQEE). Position 310 is a phosphotyrosine (tyrosine 310). Tyrosine 322 is subject to Phosphotyrosine; by SRC. The disordered stretch occupies residues 331-374 (SWPVILKPKKLPKPPAKLPKPPVGPKPEPKVFNGGLGRKLPVSS). Positions 343–356 (KPPAKLPKPPVGPK) are enriched in pro residues. Positions 382–402 (AGLADMTAELQKKLEKRRALE) form a coiled coil.

Interacts with PTK6 and CSF1R. Post-translationally, phosphorylated on tyrosine. Tyr-250 may be important for interaction with kinases. Phosphorylated by PTK6 at Tyr-250 modulates PTK6-mediated STAT3 activation. Tyr-22 and Tyr-322 appears to be phosphorylated by SRC. In terms of tissue distribution, widely expressed.

The protein resides in the cytoplasm. Functionally, substrate of protein kinase PTK6. May play a regulatory role in the acute-phase response in systemic inflammation and may modulate STAT3 activity. The chain is Signal-transducing adaptor protein 2 (STAP2) from Homo sapiens (Human).